The chain runs to 459 residues: Phosphomethylpyrimidine synthase (459 aa).

Residues Asn81, Met110, Tyr140, His176, 196–198, 237–240, and Glu276 contribute to the substrate site; these read SRG and DSLR. His280 contributes to the Zn(2+) binding site. Substrate is bound at residue Tyr303. His344 is a binding site for Zn(2+). 3 residues coordinate [4Fe-4S] cluster: Cys424, Cys427, and Cys432.

This sequence belongs to the ThiC family. [4Fe-4S] cluster is required as a cofactor.

The enzyme catalyses 5-amino-1-(5-phospho-beta-D-ribosyl)imidazole + S-adenosyl-L-methionine = 4-amino-2-methyl-5-(phosphooxymethyl)pyrimidine + CO + 5'-deoxyadenosine + formate + L-methionine + 3 H(+). The protein operates within cofactor biosynthesis; thiamine diphosphate biosynthesis. Its function is as follows. Catalyzes the synthesis of the hydroxymethylpyrimidine phosphate (HMP-P) moiety of thiamine from aminoimidazole ribotide (AIR) in a radical S-adenosyl-L-methionine (SAM)-dependent reaction. In Gloeobacter violaceus (strain ATCC 29082 / PCC 7421), this protein is Phosphomethylpyrimidine synthase.